The primary structure comprises 1296 residues: Capping protein, Arp2/3 and myosin-I linker protein 2 (1296 aa).

LRR repeat units lie at residues aspartate 63 to leucine 87, glutamate 88 to valine 110, glutamate 248 to histidine 271, asparagine 273 to arginine 296, aspartate 305 to glycine 328, cysteine 363 to alanine 386, threonine 395 to alanine 415, isoleucine 426 to aspartate 448, alanine 453 to isoleucine 477, serine 480 to arginine 506, aspartate 515 to alanine 538, asparagine 542 to lysine 565, asparagine 570 to alanine 594, asparagine 598 to leucine 621, and threonine 836 to glutamate 859. The interval isoleucine 507–leucine 601 is tropomodulin-like. Residues alanine 975–arginine 1002 form a necessary for localization at the cell membrane region. The tract at residues threonine 988 to proline 1296 is disordered. Serine 1008 carries the phosphoserine modification. Basic and acidic residues-rich tracts occupy residues arginine 1079–threonine 1091 and glutamate 1118–serine 1134. Phosphoserine is present on serine 1134. Threonine 1145 bears the Phosphothreonine mark. A compositionally biased stretch (polar residues) spans threonine 1176–asparagine 1185. Omega-N-methylarginine is present on arginine 1191. Composition is skewed to pro residues over residues proline 1199–serine 1209 and proline 1267–proline 1285. 2 positions are modified to phosphoserine: serine 1203 and serine 1281.

This sequence belongs to the CARMIL family. As to quaternary structure, forms homodimers. Interacts (via C-terminus) with heterodimeric capping protein (CP); the interaction inhibits CP activity and hence promotes actin polymerization at the barbed end of actin filaments.

The protein localises to the cytoplasm. The protein resides in the cytoskeleton. Its subcellular location is the cell membrane. It is found in the cell projection. It localises to the lamellipodium. The protein localises to the ruffle. In terms of biological role, cell membrane-cytoskeleton-associated protein that plays a role in the regulation of actin polymerization at the barbed end of actin filaments. Prevents F-actin heterodimeric capping protein (CP) activity at the leading edges of migrating cells, and hence generates uncapped barbed ends and enhances actin polymerization. Plays a role in cell protrusion formations; involved in cell polarity, lamellipodial assembly, membrane ruffling and macropinosome formations. Involved as well in cell migration and invadopodia formation during wound healing. Required for CD28-mediated stimulation of NF-kappa-B signaling, involved in naive T cells activation, maturation into T memory cells, and differentiation into T helper cells. Required for CD28-mediated differentiation of T regulatory cells. This chain is Capping protein, Arp2/3 and myosin-I linker protein 2, found in Mus musculus (Mouse).